A 210-amino-acid polypeptide reads, in one-letter code: Probable GTP-binding protein EngB (210 aa).

The region spanning 25-199 is the EngB-type G domain; it reads TGIEVAFAGR…RQKLDTWFSE (175 aa). GTP is bound by residues 33–40, 60–64, 78–81, 145–148, and 178–180; these read GRSNAGKS, GRTQL, DLPG, TKAD, and FSS. Serine 40 and threonine 62 together coordinate Mg(2+).

It belongs to the TRAFAC class TrmE-Era-EngA-EngB-Septin-like GTPase superfamily. EngB GTPase family. The cofactor is Mg(2+).

Necessary for normal cell division and for the maintenance of normal septation. The sequence is that of Probable GTP-binding protein EngB from Escherichia coli O6:H1 (strain CFT073 / ATCC 700928 / UPEC).